We begin with the raw amino-acid sequence, 743 residues long: Ectonucleotide pyrophosphatase/phosphodiesterase C27A7.3 (743 aa).

Over 1–23 (MSNRVVDVNSKKTGTSWKKKLMK) the chain is Cytoplasmic. Residues 24 to 44 (IVIWSLAMLSFIAGLVLLGLV) form a helical; Signal-anchor for type II membrane protein membrane-spanning segment. The Lumenal portion of the chain corresponds to 45 to 743 (AAATISGSKN…LRRNITTSLW (699 aa)). Residues Asp87 and Thr123 each contribute to the Zn(2+) site. The active-site Nucleophile is the Thr123. Asn195 carries an N-linked (GlcNAc...) asparagine glycan. Positions 243, 247, 286, and 287 each coordinate Zn(2+). N-linked (GlcNAc...) asparagine glycosylation is found at Asn293 and Asn320. Zn(2+) is bound at residue His383. Asn406, Asn434, and Asn536 each carry an N-linked (GlcNAc...) asparagine glycan. Residues Asp635, Asn637, Asp639, Ile641, and Asp643 each coordinate Ca(2+). Residue Asn737 is glycosylated (N-linked (GlcNAc...) asparagine).

Belongs to the nucleotide pyrophosphatase/phosphodiesterase family. Zn(2+) is required as a cofactor. Ca(2+) serves as cofactor.

The protein resides in the membrane. In terms of biological role, probable phosphodiesterase. In Caenorhabditis elegans, this protein is Ectonucleotide pyrophosphatase/phosphodiesterase C27A7.3.